The primary structure comprises 854 residues: MAHTGSTVCAFLIFAVLKNVFCQTPTSSSEVEDVIPEANTVSDNIIRQQRNNTAKGIHSDPSAFPFRVCSASNIGDIFRFQTSHSCPNTKDKEHNEGILLIFKENIVPYVFKVRKYRKIVTTSTIYNGIYADAVTNQHVFSKSVPIYETRRMDTIYQCYNSLDVTVGGNLLVYTDNDGSNMTVDLQPVDGLSNSVRRYHSQPEIHAEPGWLLGGYRRRTTVNCEVTETDARAVPPFRYFITNIGDTIEMSPFWSKAWNETEFSGEPDRTLTVAKDYRVVDYKFRGTQPQGHTRIFVDKEEYTLSWAQQFRNISYCRWAHWKSFDNAIKTEHGKSLHFVANDITASFYTPNTQTREVLGKHVCLNNTIESELKSRLAKVNDTHSPNGTAQYYLTNGGLLLVWQPLVQQKLLDAKGLLDAVKKQQNTTTTTTTTRSRRQRRSVSSGIDDVYTAESTILLTQIQFAYDTLRAQINNVLEELSRAWCREQHRASLMWNELSKINPTSVMSSIYGRPVSAKRIGDVISVSHCVVVDQDSVSLHRSMRVPGRDKTHECYSRPPVTFKFINDSHLYKGQLGVNNEILLTTTAVEICHENTEHYFQGGNNMYFYKNYRHVKTMPVGDVATLDTFMVLNLTLVENIDFQVIELYSREEKRMSTAFDIETMFREYNYYTQRVTGLRRDLTDLATNRNQFVDAFGSLMDDLGVVGKTVLNAVSSVATLFSSIVSGIINFIKNPFGGMLLFGLIAAVVITVILLNRKAKRFAQNPVQMIYPDIKTITSQREELQVDPISKHELDRIMLAMHDYHASKQPESKQDEEQGSTTSGPADWLNKAKNVLRRRAGYKPLKRTDSFESTGVP.

Positions 1–22 (MAHTGSTVCAFLIFAVLKNVFC) are cleaved as a signal peptide. Topologically, residues 23 to 732 (QTPTSSSEVE…SGIINFIKNP (710 aa)) are virion surface. Asn51 is a glycosylation site (N-linked (GlcNAc...) asparagine; by host). Intrachain disulfides connect Cys69–Cys527, Cys86–Cys483, Cys158–Cys223, Cys315–Cys362, and Cys552–Cys589. Residues 125–131 (IYNGIYA) are involved in fusion and/or binding to host membrane. Residue Asn180 is glycosylated (N-linked (GlcNAc...) asparagine; by host). The involved in fusion and/or binding to host membrane stretch occupies residues 209-217 (GWLLGGYRR). N-linked (GlcNAc...) asparagine; by host glycans are attached at residues Asn258 and Asn311. 6 N-linked (GlcNAc...) asparagine; by host glycosylation sites follow: Asn364, Asn379, Asn385, Asn424, Asn564, and Asn630. Residues 422-443 (QQNTTTTTTTTRSRRQRRSVSS) are disordered. The tract at residues 679–730 (LTDLATNRNQFVDAFGSLMDDLGVVGKTVLNAVSSVATLFSSIVSGIINFIK) is hydrophobic membrane proximal region. The helical transmembrane segment at 733–753 (FGGMLLFGLIAAVVITVILLN) threads the bilayer. Residues 754 to 854 (RKAKRFAQNP…TDSFESTGVP (101 aa)) lie on the Intravirion side of the membrane. Positions 802–813 (HASKQPESKQDE) are enriched in basic and acidic residues. The segment at 802–829 (HASKQPESKQDEEQGSTTSGPADWLNKA) is disordered. The Internalization motif signature appears at 839–842 (YKPL).

The protein belongs to the herpesviridae glycoprotein B family. As to quaternary structure, homotrimer; disulfide-linked. Binds to heparan sulfate proteoglycans. Interacts with gH/gL heterodimer. Post-translationally, a proteolytic cleavage by host furin generates two subunits that remain linked by disulfide bonds.

The protein localises to the virion membrane. It localises to the host cell membrane. Its subcellular location is the host endosome membrane. The protein resides in the host Golgi apparatus membrane. In terms of biological role, envelope glycoprotein that forms spikes at the surface of virion envelope. Essential for the initial attachment to heparan sulfate moieties of the host cell surface proteoglycans. Involved in fusion of viral and cellular membranes leading to virus entry into the host cell. Following initial binding to its host receptors, membrane fusion is mediated by the fusion machinery composed at least of gB and the heterodimer gH/gL. May be involved in the fusion between the virion envelope and the outer nuclear membrane during virion egress. The chain is Envelope glycoprotein B from Connochaetes taurinus (Blue wildebeest).